A 137-amino-acid chain; its full sequence is Small ribosomal subunit protein uS12 (137 aa).

Residues 1 to 57 form a disordered region; the sequence is MPTINQLVRKPRKSKVKKSKSPALNVGYNSRKKVQTNVSSPQKRGVATRVGTMTPKK. Residues 9-20 show a composition bias toward basic residues; it reads RKPRKSKVKKSK. D102 is subject to 3-methylthioaspartic acid.

This sequence belongs to the universal ribosomal protein uS12 family. In terms of assembly, part of the 30S ribosomal subunit. Contacts proteins S8 and S17. May interact with IF1 in the 30S initiation complex.

With S4 and S5 plays an important role in translational accuracy. Functionally, interacts with and stabilizes bases of the 16S rRNA that are involved in tRNA selection in the A site and with the mRNA backbone. Located at the interface of the 30S and 50S subunits, it traverses the body of the 30S subunit contacting proteins on the other side and probably holding the rRNA structure together. The combined cluster of proteins S8, S12 and S17 appears to hold together the shoulder and platform of the 30S subunit. The polypeptide is Small ribosomal subunit protein uS12 (Streptococcus suis (strain 05ZYH33)).